Here is a 562-residue protein sequence, read N- to C-terminus: Arginine--tRNA ligase (562 aa).

The short motif at 130-140 (ANPTGPLHIGH) is the 'HIGH' region element.

It belongs to the class-I aminoacyl-tRNA synthetase family. As to quaternary structure, monomer.

The protein localises to the cytoplasm. The enzyme catalyses tRNA(Arg) + L-arginine + ATP = L-arginyl-tRNA(Arg) + AMP + diphosphate. The protein is Arginine--tRNA ligase of Geobacter metallireducens (strain ATCC 53774 / DSM 7210 / GS-15).